A 97-amino-acid polypeptide reads, in one-letter code: Aspartyl/glutamyl-tRNA(Asn/Gln) amidotransferase subunit C (97 aa).

This sequence belongs to the GatC family. Heterotrimer of A, B and C subunits.

The catalysed reaction is L-glutamyl-tRNA(Gln) + L-glutamine + ATP + H2O = L-glutaminyl-tRNA(Gln) + L-glutamate + ADP + phosphate + H(+). The enzyme catalyses L-aspartyl-tRNA(Asn) + L-glutamine + ATP + H2O = L-asparaginyl-tRNA(Asn) + L-glutamate + ADP + phosphate + 2 H(+). Functionally, allows the formation of correctly charged Asn-tRNA(Asn) or Gln-tRNA(Gln) through the transamidation of misacylated Asp-tRNA(Asn) or Glu-tRNA(Gln) in organisms which lack either or both of asparaginyl-tRNA or glutaminyl-tRNA synthetases. The reaction takes place in the presence of glutamine and ATP through an activated phospho-Asp-tRNA(Asn) or phospho-Glu-tRNA(Gln). This is Aspartyl/glutamyl-tRNA(Asn/Gln) amidotransferase subunit C from Picosynechococcus sp. (strain ATCC 27264 / PCC 7002 / PR-6) (Agmenellum quadruplicatum).